A 156-amino-acid polypeptide reads, in one-letter code: 17.4 kDa class I heat shock protein (156 aa).

The 115-residue stretch at 42–156 (DVAAFTNAKV…PEVKSVDISG (115 aa)) folds into the sHSP domain.

Belongs to the small heat shock protein (HSP20) family. As to quaternary structure, may form oligomeric structures. Binds to AKR2A.

It localises to the cytoplasm. This chain is 17.4 kDa class I heat shock protein (HSP17.4A), found in Arabidopsis thaliana (Mouse-ear cress).